The following is a 209-amino-acid chain: Large ribosomal subunit protein uL3 (209 aa).

The interval 122–152 (AIKRHGQSRGPMSHGSRYHRRPGSMGPVDPN) is disordered.

The protein belongs to the universal ribosomal protein uL3 family. In terms of assembly, part of the 50S ribosomal subunit. Forms a cluster with proteins L14 and L19. Interacts with RNA helicase CshA.

Functionally, one of the primary rRNA binding proteins, it binds directly near the 3'-end of the 23S rRNA, where it nucleates assembly of the 50S subunit. Strongly stimulates 23S rRNA precursor processing by mini-ribonuclease 3 (MrnC); 20-30% DMSO can replace L3, suggesting the protein may alter rRNA conformation. This Bacillus subtilis (strain 168) protein is Large ribosomal subunit protein uL3.